Consider the following 376-residue polypeptide: UDP-N-acetylglucosamine--N-acetylmuramyl-(pentapeptide) pyrophosphoryl-undecaprenol N-acetylglucosamine transferase (376 aa).

Residues 12-14, asparagine 125, arginine 165, serine 197, and glutamine 296 contribute to the UDP-N-acetyl-alpha-D-glucosamine site; that span reads TGG.

Belongs to the glycosyltransferase 28 family. MurG subfamily.

It is found in the cell inner membrane. It carries out the reaction di-trans,octa-cis-undecaprenyl diphospho-N-acetyl-alpha-D-muramoyl-L-alanyl-D-glutamyl-meso-2,6-diaminopimeloyl-D-alanyl-D-alanine + UDP-N-acetyl-alpha-D-glucosamine = di-trans,octa-cis-undecaprenyl diphospho-[N-acetyl-alpha-D-glucosaminyl-(1-&gt;4)]-N-acetyl-alpha-D-muramoyl-L-alanyl-D-glutamyl-meso-2,6-diaminopimeloyl-D-alanyl-D-alanine + UDP + H(+). Its pathway is cell wall biogenesis; peptidoglycan biosynthesis. In terms of biological role, cell wall formation. Catalyzes the transfer of a GlcNAc subunit on undecaprenyl-pyrophosphoryl-MurNAc-pentapeptide (lipid intermediate I) to form undecaprenyl-pyrophosphoryl-MurNAc-(pentapeptide)GlcNAc (lipid intermediate II). The polypeptide is UDP-N-acetylglucosamine--N-acetylmuramyl-(pentapeptide) pyrophosphoryl-undecaprenol N-acetylglucosamine transferase (Protochlamydia amoebophila (strain UWE25)).